Consider the following 273-residue polypeptide: WIMGHMVNAIAQIDEFVNLGANSIETDVSFDKNANPEYTYHGIPCDCGRTCTKWEYFNTFLGGLRKATTPGDSKYHEKLVLVVFDLKTGSLYDNQAYDAGTKLAKSLLQNYWNKGNNGGRAYIVLSIPNLDHYKLITGFKETLTKEEHPELMDKVGYDFSGNDDIGDVAKAYKKAGVTGHVWQSDGITNCLLRGLDRVRKAVANRDSSNGYINKVYYWTVDKRASTRDALDAGVDGIMTNYPDVIADVLSESAYTAKFRIATYDDNPWEMFKN.

Histidine 5 is an active-site residue. Residues glutamate 25 and aspartate 27 each coordinate Mg(2+). Histidine 41 serves as the catalytic Nucleophile. 2 disulfide bridges follow: cysteine 45–cysteine 51 and cysteine 47–cysteine 190. Residue aspartate 85 participates in Mg(2+) binding.

This sequence belongs to the arthropod phospholipase D family. Class II subfamily. The cofactor is Mg(2+). As to expression, expressed by the venom gland.

Its subcellular location is the secreted. It catalyses the reaction an N-(acyl)-sphingosylphosphocholine = an N-(acyl)-sphingosyl-1,3-cyclic phosphate + choline. The enzyme catalyses an N-(acyl)-sphingosylphosphoethanolamine = an N-(acyl)-sphingosyl-1,3-cyclic phosphate + ethanolamine. It carries out the reaction a 1-acyl-sn-glycero-3-phosphocholine = a 1-acyl-sn-glycero-2,3-cyclic phosphate + choline. The catalysed reaction is a 1-acyl-sn-glycero-3-phosphoethanolamine = a 1-acyl-sn-glycero-2,3-cyclic phosphate + ethanolamine. Its function is as follows. Dermonecrotic toxins cleave the phosphodiester linkage between the phosphate and headgroup of certain phospholipids (sphingolipid and lysolipid substrates), forming an alcohol (often choline) and a cyclic phosphate. This toxin acts on sphingomyelin (SM). It may also act on ceramide phosphoethanolamine (CPE), lysophosphatidylcholine (LPC) and lysophosphatidylethanolamine (LPE), but not on lysophosphatidylserine (LPS), and lysophosphatidylglycerol (LPG). It acts by transphosphatidylation, releasing exclusively cyclic phosphate products as second products. Induces dermonecrosis, hemolysis, increased vascular permeability, edema, inflammatory response, and platelet aggregation. The chain is Dermonecrotic toxin LsaSicTox-alphaIB1aiii from Loxosceles sabina (Tucson recluse spider).